Reading from the N-terminus, the 212-residue chain is Nitrile hydratase subunit beta (212 aa).

Belongs to the nitrile hydratase subunit beta family. In terms of assembly, heterodimer of an alpha and a beta chain.

It carries out the reaction an aliphatic primary amide = an aliphatic nitrile + H2O. Functionally, NHase catalyzes the hydration of various nitrile compounds to the corresponding amides. This Rhodococcus erythropolis (Arthrobacter picolinophilus) protein is Nitrile hydratase subunit beta (nthB).